A 185-amino-acid polypeptide reads, in one-letter code: Ribosome-recycling factor (185 aa).

The protein belongs to the RRF family.

Its subcellular location is the cytoplasm. Its function is as follows. Responsible for the release of ribosomes from messenger RNA at the termination of protein biosynthesis. May increase the efficiency of translation by recycling ribosomes from one round of translation to another. The polypeptide is Ribosome-recycling factor (Shewanella sp. (strain ANA-3)).